Reading from the N-terminus, the 450-residue chain is tRNA modification GTPase MnmE (450 aa).

Residues K21, E78, and K117 each contribute to the (6S)-5-formyl-5,6,7,8-tetrahydrofolate site. In terms of domain architecture, TrmE-type G spans 213 to 376 (GHALSIVGKP…LSQKISAFFP (164 aa)). N223 serves as a coordination point for K(+). GTP contacts are provided by residues 223 to 228 (NAGKSS), 242 to 248 (SDIKGTT), and 267 to 270 (DTAG). A Mg(2+)-binding site is contributed by S227. Residues S242, I244, and T247 each contribute to the K(+) site. Residue T248 participates in Mg(2+) binding. K450 lines the (6S)-5-formyl-5,6,7,8-tetrahydrofolate pocket.

The protein belongs to the TRAFAC class TrmE-Era-EngA-EngB-Septin-like GTPase superfamily. TrmE GTPase family. Homodimer. Heterotetramer of two MnmE and two MnmG subunits. Requires K(+) as cofactor.

The protein resides in the cytoplasm. Exhibits a very high intrinsic GTPase hydrolysis rate. Involved in the addition of a carboxymethylaminomethyl (cmnm) group at the wobble position (U34) of certain tRNAs, forming tRNA-cmnm(5)s(2)U34. In Helicobacter pylori (strain Shi470), this protein is tRNA modification GTPase MnmE.